The sequence spans 208 residues: Somatotropin-B (208 aa).

Positions 1–25 (MVPGSCSSFGLLVILSFQNVPDVGG) are cleaved as a signal peptide. H44 is a Zn(2+) binding site. Cysteines 77 and 181 form a disulfide. E190 lines the Zn(2+) pocket. C198 and C206 are joined by a disulfide.

Belongs to the somatotropin/prolactin family.

The protein localises to the secreted. Functionally, growth hormone plays an important role in growth control. This Xenopus laevis (African clawed frog) protein is Somatotropin-B (gh-b).